The chain runs to 695 residues: MGAKEKLEAMLNVALRVPSIMLLDVLYRWDVSSFFQQIQRSSLNKNPLFQYKYLALNMHYVGYILSVVLLTLPRQHLAKLYLYFVAALLLFAGHQISRDYVRSELESGYEGPMHLEPLSMNRFITALVGQLVVCTLCSCVMKTKQIWLFSAHMLPLLARLCLIPIETIVVINKFAMIFTGLEVLYFLASNLLVPFNLAKSAYRELAQVVEVYGLLALGMSLWNQLVVPVLFMVFWLVLFALQIYTYFSTRDQPTSRERLLFLFLTSIAECCSTPYSLLGLVFTVSFVALGVLTLCKFYLQGYRAFMNDPAMNRGMTEGVTLLILAVQTGLIELQVVHRAFLLSIILFIVVASILQSMLEIADPIVLALGASRDKSLWKHFRAVSLCLFLLVFPSYMAYMICQFFHMDFWLLIIISSSILTSLQVLGTLFVYVLFMIEEFRKEPVENVDDAIYYVNGTYRLLEFLVALCVVAYGVSETVFGEWTVMGSMIIFIHSYYNVWLRAQLGWKSFLLRRDAVNKIKSLPVSTKEQLEQHNDICSICYQDMNSAVITPCSHFFHPGCLKKWLYVQETCPLCHCQLKSLSQQAVAESGSSTNPVVEQSANNPPQEPLSAVAATTETLGTVPTCSALEQEPTMDIEPAESLVERRGELEVHVSQEEANSNSNEVLQRILTTGKVQPEDLNVKALPPESEVCAGI.

Helical transmembrane passes span 53–73, 77–97, 123–143, 146–166, 168–188, 225–245, 275–295, 316–336, 340–360, 384–404, 410–430, 460–480, and 482–502; these read YLAL…LTLP, LAKL…HQIS, FITA…VMKT, IWLF…IPIE, IVVI…YFLA, LVVP…QIYT, YSLL…LTLC, TEGV…LQVV, FLLS…MLEI, SLCL…CQFF, LLII…TLFV, LLEF…TVFG, and WTVM…WLRA. Residues 537–575 form an RING-type; atypical zinc finger; it reads CSICYQDMNSAVITPCSHFFHPGCLKKWLYVQETCPLCH. The span at 589-604 shows a compositional bias: polar residues; that stretch reads SGSSTNPVVEQSANNP. Positions 589 to 608 are disordered; the sequence is SGSSTNPVVEQSANNPPQEP.

The protein localises to the membrane. The chain is RING finger protein 145 (rnf145) from Xenopus laevis (African clawed frog).